Reading from the N-terminus, the 920-residue chain is Protein translocase subunit SecA 2 (920 aa).

ATP contacts are provided by residues Q91, 109-113 (GEGKT), and D527. The segment covering 859-870 (GEGSALDRRPTD) has biased composition (basic and acidic residues). The segment at 859–920 (GEGSALDRRP…KSRNRRRRKR (62 aa)) is disordered. Residues 906–920 (PHRPGKSRNRRRRKR) show a composition bias toward basic residues.

This sequence belongs to the SecA family. Monomer and homodimer. Part of the essential Sec protein translocation apparatus which comprises SecA, SecYEG and auxiliary proteins SecDF. Other proteins may also be involved.

The protein localises to the cell membrane. Its subcellular location is the cytoplasm. It catalyses the reaction ATP + H2O + cellular proteinSide 1 = ADP + phosphate + cellular proteinSide 2.. Functionally, part of the Sec protein translocase complex. Interacts with the SecYEG preprotein conducting channel. Has a central role in coupling the hydrolysis of ATP to the transfer of proteins into and across the cell membrane, serving as an ATP-driven molecular motor driving the stepwise translocation of polypeptide chains across the membrane. This Streptomyces avermitilis (strain ATCC 31267 / DSM 46492 / JCM 5070 / NBRC 14893 / NCIMB 12804 / NRRL 8165 / MA-4680) protein is Protein translocase subunit SecA 2.